The chain runs to 499 residues: Rhamnogalacturonan I rhamnosyltransferase 1 (499 aa).

Residues 31–50 (WFVRVCSSILVWTCLVQLFA) form a helical; Signal-anchor for type II membrane protein membrane-spanning segment. N-linked (GlcNAc...) asparagine glycans are attached at residues N88, N121, and N207. 261–263 (HLR) lines the substrate pocket. N375, N435, and N496 each carry an N-linked (GlcNAc...) asparagine glycan.

This sequence belongs to the glycosyltransferase GT106 family.

Its subcellular location is the golgi apparatus membrane. It carries out the reaction alpha-D-galacturonosyl-[(1-&gt;2)-alpha-L-rhamnosyl-(1-&gt;4)-alpha-D-galacturonosyl](n) + UDP-beta-L-rhamnose = [(1-&gt;2)-alpha-L-rhamnosyl-(1-&gt;4)-alpha-D-galacturonosyl](n+1) + UDP + H(+). The protein operates within glycan metabolism; pectin biosynthesis. Its function is as follows. Glycosyltransferase involved in the formation of rhamnogalacturonan I (RG-I) oligosaccharides in the seed coat mucilage, which is a specialized cell wall with abundant RG-I. Transfers the rhamnose residue from UDP-beta-L-rhamnose to RG-I oligosaccharides. This chain is Rhamnogalacturonan I rhamnosyltransferase 1, found in Arabidopsis thaliana (Mouse-ear cress).